A 306-amino-acid polypeptide reads, in one-letter code: tRNA pseudouridine synthase B (306 aa).

Asp39 acts as the Nucleophile in catalysis.

This sequence belongs to the pseudouridine synthase TruB family. Type 1 subfamily.

The enzyme catalyses uridine(55) in tRNA = pseudouridine(55) in tRNA. Its function is as follows. Responsible for synthesis of pseudouridine from uracil-55 in the psi GC loop of transfer RNAs. The chain is tRNA pseudouridine synthase B from Arthrobacter sp. (strain FB24).